The primary structure comprises 212 residues: Large ribosomal subunit protein bL25 (212 aa).

Residues 1–25 are disordered; the sequence is MSQSTIHKIAVKKRTETGKNENNRL. Residues 13–24 are compositionally biased toward basic and acidic residues; the sequence is KRTETGKNENNR.

This sequence belongs to the bacterial ribosomal protein bL25 family. CTC subfamily. As to quaternary structure, part of the 50S ribosomal subunit; part of the 5S rRNA/L5/L18/L25 subcomplex. Contacts the 5S rRNA. Binds to the 5S rRNA independently of L5 and L18.

Functionally, this is one of the proteins that binds to the 5S RNA in the ribosome where it forms part of the central protuberance. This Leptospira borgpetersenii serovar Hardjo-bovis (strain L550) protein is Large ribosomal subunit protein bL25.